A 208-amino-acid chain; its full sequence is Methyl-CpG-binding domain protein 3-like 3 (208 aa).

The protein belongs to the MBD3L family.

This chain is Methyl-CpG-binding domain protein 3-like 3 (MBD3L3), found in Homo sapiens (Human).